Here is a 607-residue protein sequence, read N- to C-terminus: Aspartate--tRNA(Asp/Asn) ligase (607 aa).

L-aspartate is bound at residue E176. An aspartate region spans residues 200–203; it reads QQFK. L-aspartate contacts are provided by R222 and H456. 222–224 is an ATP binding site; the sequence is RDE. E496 lines the ATP pocket. R503 lines the L-aspartate pocket. Position 548–551 (548–551) interacts with ATP; sequence GIDR.

It belongs to the class-II aminoacyl-tRNA synthetase family. Type 1 subfamily. As to quaternary structure, homodimer.

Its subcellular location is the cytoplasm. The catalysed reaction is tRNA(Asx) + L-aspartate + ATP = L-aspartyl-tRNA(Asx) + AMP + diphosphate. Its function is as follows. Aspartyl-tRNA synthetase with relaxed tRNA specificity since it is able to aspartylate not only its cognate tRNA(Asp) but also tRNA(Asn). Reaction proceeds in two steps: L-aspartate is first activated by ATP to form Asp-AMP and then transferred to the acceptor end of tRNA(Asp/Asn). This is Aspartate--tRNA(Asp/Asn) ligase from Parvibaculum lavamentivorans (strain DS-1 / DSM 13023 / NCIMB 13966).